Consider the following 188-residue polypeptide: Elongation factor P (188 aa).

It belongs to the elongation factor P family.

It localises to the cytoplasm. It participates in protein biosynthesis; polypeptide chain elongation. Involved in peptide bond synthesis. Stimulates efficient translation and peptide-bond synthesis on native or reconstituted 70S ribosomes in vitro. Probably functions indirectly by altering the affinity of the ribosome for aminoacyl-tRNA, thus increasing their reactivity as acceptors for peptidyl transferase. This is Elongation factor P (efp) from Rickettsia prowazekii (strain Madrid E).